The primary structure comprises 607 residues: UvrABC system protein C (607 aa).

Positions 16-94 (GRPGVYRMFD…IKEWRPPYNI (79 aa)) constitute a GIY-YIG domain. The 36-residue stretch at 203–238 (HALTNELSTAMEEAAINLEFERAAELRDQIALLRRV) folds into the UVR domain.

It belongs to the UvrC family. As to quaternary structure, interacts with UvrB in an incision complex.

It localises to the cytoplasm. The UvrABC repair system catalyzes the recognition and processing of DNA lesions. UvrC both incises the 5' and 3' sides of the lesion. The N-terminal half is responsible for the 3' incision and the C-terminal half is responsible for the 5' incision. This is UvrABC system protein C from Pseudomonas fluorescens (strain Pf0-1).